We begin with the raw amino-acid sequence, 353 residues long: Photosystem II D2 protein (353 aa).

Position 2 is an N-acetylthreonine (Thr-2). A Phosphothreonine modification is found at Thr-2. The chain crosses the membrane as a helical span at residues 41–61; it reads TAYFALGGWFTGTTFVTSWYT. Residue His-118 participates in chlorophyll a binding. Residues 125-141 form a helical membrane-spanning segment; it reads GFMLRQFELARSVQLRP. The pheophytin a site is built by Gln-130 and Asn-143. The chain crosses the membrane as a helical span at residues 153-166; sequence VFVSVFLIYPLGQS. A chlorophyll a-binding site is contributed by His-198. Residues 208-228 traverse the membrane as a helical segment; it reads AALLCAIHGATVENTLFEDGD. 2 residues coordinate a plastoquinone: His-215 and Phe-262. Residue His-215 participates in Fe cation binding. His-269 is a binding site for Fe cation. The helical transmembrane segment at 279-295 threads the bilayer; it reads GLWMSAIGVVGLALNLR.

The protein belongs to the reaction center PufL/M/PsbA/D family. In terms of assembly, PSII is composed of 1 copy each of membrane proteins PsbA, PsbB, PsbC, PsbD, PsbE, PsbF, PsbH, PsbI, PsbJ, PsbK, PsbL, PsbM, PsbT, PsbX, PsbY, PsbZ, Psb30/Ycf12, at least 3 peripheral proteins of the oxygen-evolving complex and a large number of cofactors. It forms dimeric complexes. Requires The D1/D2 heterodimer binds P680, chlorophylls that are the primary electron donor of PSII, and subsequent electron acceptors. It shares a non-heme iron and each subunit binds pheophytin, quinone, additional chlorophylls, carotenoids and lipids. There is also a Cl(-1) ion associated with D1 and D2, which is required for oxygen evolution. The PSII complex binds additional chlorophylls, carotenoids and specific lipids. as cofactor.

The protein resides in the plastid. Its subcellular location is the chloroplast thylakoid membrane. It carries out the reaction 2 a plastoquinone + 4 hnu + 2 H2O = 2 a plastoquinol + O2. Functionally, photosystem II (PSII) is a light-driven water:plastoquinone oxidoreductase that uses light energy to abstract electrons from H(2)O, generating O(2) and a proton gradient subsequently used for ATP formation. It consists of a core antenna complex that captures photons, and an electron transfer chain that converts photonic excitation into a charge separation. The D1/D2 (PsbA/PsbD) reaction center heterodimer binds P680, the primary electron donor of PSII as well as several subsequent electron acceptors. D2 is needed for assembly of a stable PSII complex. The protein is Photosystem II D2 protein of Adiantum capillus-veneris (Maidenhair fern).